Consider the following 319-residue polypeptide: Protease HtpX homolog (319 aa).

A run of 2 helical transmembrane segments spans residues 6–26 (TAMLLAFMTVLFMAVGYVIGG) and 28–48 (GGMMIALVIAAGMNFFSYWNS). H130 is a Zn(2+) binding site. Residue E131 is part of the active site. H134 contributes to the Zn(2+) binding site. 2 consecutive transmembrane segments (helical) span residues 145-165 (MTATLAGAISMLGNFAFFFGG) and 172-192 (PLGFIGVLIAMIVAPLAAALV). Zn(2+) is bound at residue E201. A disordered region spans residues 280–319 (EMSTGSTAPVRPDNAVRKSRSVPRTGWGRGGSEPPKGPWS).

It belongs to the peptidase M48B family. Requires Zn(2+) as cofactor.

It localises to the cell inner membrane. This is Protease HtpX homolog from Sinorhizobium medicae (strain WSM419) (Ensifer medicae).